The primary structure comprises 109 residues: Small ribosomal subunit protein uS17 (109 aa).

Belongs to the universal ribosomal protein uS17 family. In terms of assembly, part of the 30S ribosomal subunit.

One of the primary rRNA binding proteins, it binds specifically to the 5'-end of 16S ribosomal RNA. This is Small ribosomal subunit protein uS17 from Thermoplasma volcanium (strain ATCC 51530 / DSM 4299 / JCM 9571 / NBRC 15438 / GSS1).